We begin with the raw amino-acid sequence, 723 residues long: LPS-assembly protein LptD (723 aa).

A signal peptide spans 1-23 (MNTLKLCLILYACLVLLPVRVMS).

The protein belongs to the LptD family. Component of the lipopolysaccharide transport and assembly complex. Interacts with LptE and LptA.

It localises to the cell outer membrane. Together with LptE, is involved in the assembly of lipopolysaccharide (LPS) at the surface of the outer membrane. The chain is LPS-assembly protein LptD from Nitrosomonas europaea (strain ATCC 19718 / CIP 103999 / KCTC 2705 / NBRC 14298).